Reading from the N-terminus, the 502-residue chain is Lanosterol 14-alpha demethylase (502 aa).

Residues 22-42 traverse the membrane as a helical segment; it reads GNLASMLLIACAFTLSLVYLF. Cys-448 contributes to the heme binding site.

It belongs to the cytochrome P450 family. Heme is required as a cofactor. In terms of processing, ubiquitinated by MARCHF6, leading to proteasomal degradation.

It is found in the endoplasmic reticulum membrane. Its subcellular location is the microsome membrane. The catalysed reaction is a 14alpha-methyl steroid + 3 reduced [NADPH--hemoprotein reductase] + 3 O2 = a Delta(14) steroid + formate + 3 oxidized [NADPH--hemoprotein reductase] + 4 H2O + 4 H(+). The enzyme catalyses lanosterol + 3 reduced [NADPH--hemoprotein reductase] + 3 O2 = 4,4-dimethyl-5alpha-cholesta-8,14,24-trien-3beta-ol + formate + 3 oxidized [NADPH--hemoprotein reductase] + 4 H2O + 4 H(+). It catalyses the reaction 24,25-dihydrolanosterol + 3 reduced [NADPH--hemoprotein reductase] + 3 O2 = 4,4-dimethyl-8,14-cholestadien-3beta-ol + formate + 3 oxidized [NADPH--hemoprotein reductase] + 4 H2O + 4 H(+). It carries out the reaction a 14alpha-methyl steroid + reduced [NADPH--hemoprotein reductase] + O2 = a 14alpha-hydroxymethyl steroid + oxidized [NADPH--hemoprotein reductase] + H2O + H(+). The catalysed reaction is a 14alpha-hydroxymethyl steroid + reduced [NADPH--hemoprotein reductase] + O2 = a 14alpha-formyl steroid + oxidized [NADPH--hemoprotein reductase] + 2 H2O + H(+). The enzyme catalyses a 14alpha-formyl steroid + reduced [NADPH--hemoprotein reductase] + O2 = a Delta(14) steroid + formate + oxidized [NADPH--hemoprotein reductase] + H2O + 2 H(+). It catalyses the reaction lanosterol + reduced [NADPH--hemoprotein reductase] + O2 = 32-hydroxylanosterol + oxidized [NADPH--hemoprotein reductase] + H2O + H(+). It carries out the reaction 32-hydroxylanosterol + reduced [NADPH--hemoprotein reductase] + O2 = 32-oxolanosterol + oxidized [NADPH--hemoprotein reductase] + 2 H2O + H(+). The catalysed reaction is 32-oxolanosterol + reduced [NADPH--hemoprotein reductase] + O2 = 4,4-dimethyl-5alpha-cholesta-8,14,24-trien-3beta-ol + formate + oxidized [NADPH--hemoprotein reductase] + H2O + 2 H(+). The enzyme catalyses 24,25-dihydrolanosterol + reduced [NADPH--hemoprotein reductase] + O2 = 32-hydroxy-24,25-dihydrolanosterol + oxidized [NADPH--hemoprotein reductase] + H2O + H(+). It catalyses the reaction 32-hydroxy-24,25-dihydrolanosterol + reduced [NADPH--hemoprotein reductase] + O2 = 32-oxo-24,25-dihydrolanosterol + oxidized [NADPH--hemoprotein reductase] + 2 H2O + H(+). It carries out the reaction 32-oxo-24,25-dihydrolanosterol + reduced [NADPH--hemoprotein reductase] + O2 = 4,4-dimethyl-8,14-cholestadien-3beta-ol + formate + oxidized [NADPH--hemoprotein reductase] + H2O + 2 H(+). Its pathway is steroid biosynthesis; zymosterol biosynthesis; zymosterol from lanosterol: step 1/6. Inhibited by azalanstat. Inhibited by azole antifungal agents ketoconazole, itraconazole and fluconazole. Functionally, sterol 14alpha-demethylase that plays a critical role in the cholesterol biosynthesis pathway, being cholesterol the major sterol component in mammalian membranes as well as a precursor for bile acid and steroid hormone synthesis. Cytochrome P450 monooxygenase that catalyzes the three-step oxidative removal of the 14alpha-methyl group (C-32) of sterols such as lanosterol (lanosta-8,24-dien-3beta-ol) and 24,25-dihydrolanosterol (DHL) in the form of formate, and converts the sterols to 4,4-dimethyl-5alpha-cholesta-8,14,24-trien-3beta-ol and 4,4-dimethyl-8,14-cholestadien-3beta-ol, respectively, which are intermediates of cholesterol biosynthesis. Can also demethylate substrates not intrinsic to mammals, such as eburicol (24-methylene-24,25-dihydrolanosterol), but at a lower rate than DHL. This chain is Lanosterol 14-alpha demethylase, found in Bos taurus (Bovine).